The chain runs to 150 residues: MPFLLLALLVLAIDQLSKYMIRTNFQPNESLPVIGSFFHLTYVHNPGAAFGLLANKTQVFVGVTVLVAIIILAAYRYLPPDRPLLRLSLALMLGGALGNLIDRLRFGYVVDFLDLRIWPVFNLADMAIVFGVIILCWQLLLPAGEQGREP.

A run of 2 helical transmembrane segments spans residues 59–79 and 84–101; these read VFVG…RYLP and LLRL…GNLI. Active-site residues include Asp-111 and Asp-125. The chain crosses the membrane as a helical span at residues 117-137; that stretch reads IWPVFNLADMAIVFGVIILCW.

The protein belongs to the peptidase A8 family.

The protein resides in the cell membrane. It catalyses the reaction Release of signal peptides from bacterial membrane prolipoproteins. Hydrolyzes -Xaa-Yaa-Zaa-|-(S,diacylglyceryl)Cys-, in which Xaa is hydrophobic (preferably Leu), and Yaa (Ala or Ser) and Zaa (Gly or Ala) have small, neutral side chains.. Its pathway is protein modification; lipoprotein biosynthesis (signal peptide cleavage). This protein specifically catalyzes the removal of signal peptides from prolipoproteins. This Moorella thermoacetica (strain ATCC 39073 / JCM 9320) protein is Lipoprotein signal peptidase.